We begin with the raw amino-acid sequence, 413 residues long: Zinc finger CCCH domain-containing protein 6 (413 aa).

3 disordered regions span residues 28–61, 159–191, and 333–356; these read PSQV…FGGP, DSAS…TLPA, and QPGG…RDSK. The segment covering 176–189 has biased composition (polar residues); the sequence is PSITDENTSTSSTL. The C3H1-type zinc-finger motif lies at 357–385; the sequence is PKIMKACMYFNSARGCRHGANCMYQHDAT. The segment covering 389 to 403 has biased composition (polar residues); the sequence is PRNLNNGNINTSDMQ. A disordered region spans residues 389-413; it reads PRNLNNGNINTSDMQNAKRMRFDRD.

The sequence is that of Zinc finger CCCH domain-containing protein 6 from Arabidopsis thaliana (Mouse-ear cress).